A 122-amino-acid polypeptide reads, in one-letter code: Transcription initiation factor IIA subunit 2 (122 aa).

Phosphoserine occurs at positions 95 and 102.

It belongs to the TFIIA subunit 2 family. TFIIA is a heterodimer composed of the large TOA1 and a small TOA2 subunits. Interacts with TBP. Interacts with TAF11. Interacts with KAP122.

It is found in the cytoplasm. The protein localises to the nucleus. In terms of biological role, TFIIA is a component of the transcription machinery of RNA polymerase II and plays an important role in transcriptional activation. TFIIA in a complex with TBP mediates transcriptional activity. The protein is Transcription initiation factor IIA subunit 2 (TOA2) of Saccharomyces cerevisiae (strain ATCC 204508 / S288c) (Baker's yeast).